The following is a 156-amino-acid chain: MDITIIAVGNKMPDWVNEGFSDYATRFNAEINMQLKEIPLQKRGDDKQIAAARSKESAQILAALAGKDYVVTLDIAGKNYRSEQLAARLQFWQENARSLALIIGGPEGLSAEVKNRAQESWSLGALTLPHPLVRIIVAEALYRAWSINHHHPYHRA.

S-adenosyl-L-methionine is bound by residues leucine 73, glycine 104, and 123 to 128 (LGALTL).

The protein belongs to the RNA methyltransferase RlmH family. In terms of assembly, homodimer.

It is found in the cytoplasm. It catalyses the reaction pseudouridine(1915) in 23S rRNA + S-adenosyl-L-methionine = N(3)-methylpseudouridine(1915) in 23S rRNA + S-adenosyl-L-homocysteine + H(+). In terms of biological role, specifically methylates the pseudouridine at position 1915 (m3Psi1915) in 23S rRNA. The sequence is that of Ribosomal RNA large subunit methyltransferase H from Dichelobacter nodosus (strain VCS1703A).